We begin with the raw amino-acid sequence, 923 residues long: Cell cycle and apoptosis regulator protein 2 (923 aa).

The segment at 1-35 (MSQFKRQRINPLPGGRNFSGTASTSLLGPPPGLLT) is disordered. Thr-35 is modified (phosphothreonine). Lys-112 is subject to N6-acetyllysine; by KAT8. An N6-methyllysine modification is found at Lys-123. Residue Ser-124 is modified to Phosphoserine. Disordered regions lie at residues 178–218 (LNRF…KKPR), 446–510 (KAAE…PAVI), and 568–643 (VSPP…SEDL). Residue Arg-180 is modified to Omega-N-methylarginine. Residues 188-200 (GRLDQGRSDDYDS) are compositionally biased toward basic and acidic residues. Lys-215 carries the post-translational modification N6-acetyllysine; by KAT8. Positions 446–458 (KAAEAAPPTQEAQ) are enriched in low complexity. Position 454 is a phosphothreonine; by ATM, ATR and CK2 (Thr-454). At Thr-484 the chain carries Phosphothreonine. Ser-569 carries the phosphoserine modification. Over residues 572 to 602 (EPEKEEAAKEEATKEEEAIKEEVVKEPKDEA) the composition is skewed to basic and acidic residues. Lys-591 participates in a covalent cross-link: Glycyl lysine isopeptide (Lys-Gly) (interchain with G-Cter in SUMO2 and SUMO3); alternate. A Glycyl lysine isopeptide (Lys-Gly) (interchain with G-Cter in SUMO2); alternate cross-link involves residue Lys-591. The interaction with MCC stretch occupies residues 610–670 (ESEAPLKEDG…EEFAGAKLED (61 aa)). Phosphoserine occurs at positions 627, 675, 678, 681, 687, and 808. An interaction with NR1D1 region spans residues 704-923 (DCLLAFVFFD…VEKEEPAPSN (220 aa)). The stretch at 829 to 909 (LENKIHTLEL…QLEIQRVVEK (81 aa)) forms a coiled coil. Thr-897 bears the Phosphothreonine mark.

Component of the DBIRD complex. Interacts with ZNF326/ZIRD; the interaction is direct. Interacts (via N-terminus) with SIRT1, which inhibits the deacetylation of substrates. Interacts (via N-terminus) with SUV39H1; this interaction abolishes the interaction with SIRT1. Component of a nuclear receptor-mediated transcription complex composed of at least ZNF335, CCAR2 and EMSY; the complex stimulates the transcription of nuclear receptor target genes such as SOX9 and HOXA1. Within the complex interacts with EMSY and interacts with ZNF335 (via C-terminus). Components of this complex may associate with components of a histone methylation complex to form a complex at least composed of ZNF335, HCFC1, CCAR2, EMSY, MKI67, RBBP5, ASH2L and WDR5. Within this complex, interacts with ASH2L. Interacts with NR1D1. Interacts (via N-terminus) with ESR1 and ESR2. Interacts (via N-terminus) with HDAC3 (via C-terminus). Interacts with HDAC1 and MED2F. Interacts with MCC. Interacts (via N-terminus) with NR1H2 and NR1H3 in a ligand-independent manner. Interacts with CSNK2A1. Interacts (via N-terminus) with p53/TP53. Interacts (via N-terminus) with BRCA1 (via the BRCT domains). Interacts (via N-terminus) with CHEK2 (via protein kinase domain). Interacts with PSEM3. Interacts (via N-terminus) with PSIA3 and SENP1. The sumoylated form shows a preferential interaction with SIRT1 as compared to its unmodified form. Interacts with CECR2; may form part of the CERF-1 and/or CEF-5 ISWI chromatin remodeling complexes in embryonic stem cells. ATM/ATR-mediated phosphorylation at Thr-454 upon DNA damage promotes binding to SIRT1. Phosphorylation at Thr-454 promotes its sumoylation by switching the binding partner of CCAR2 from SENP1 to PIAS3. In terms of processing, acetylation at Lys-112 and Lys-215 by KAT8 prevents inhibitory binding to SIRT1 and increases its deacetylase activity. Post-translationally, genotoxic stress induces its sumoylation and sumoylation promotes the SIRT1-CCAR2 interaction which in turn inhibits SIRT1-mediated deacetylation of p53/TP53. Sumoylation leads to transcriptional activation of p53/TP53 by sequestering SIRT1 from p53/TP53. Desumoylated by SENP1. As to expression, expressed in gastric carcinoma tissue and the expression gradually increases with the progression of the carcinoma (at protein level). Expressed ubiquitously in normal tissues. Expressed in 84 to 100% of neoplastic breast, lung, and colon tissues.

It is found in the nucleus. The protein resides in the cytoplasm. It localises to the cytoskeleton. Its subcellular location is the spindle. Its function is as follows. Core component of the DBIRD complex, a multiprotein complex that acts at the interface between core mRNP particles and RNA polymerase II (RNAPII) and integrates transcript elongation with the regulation of alternative splicing: the DBIRD complex affects local transcript elongation rates and alternative splicing of a large set of exons embedded in (A + T)-rich DNA regions. Inhibits SIRT1 deacetylase activity leading to increasing levels of p53/TP53 acetylation and p53-mediated apoptosis. Inhibits SUV39H1 methyltransferase activity. Mediates ligand-dependent transcriptional activation by nuclear hormone receptors. Plays a critical role in maintaining genomic stability and cellular integrity following UV-induced genotoxic stress. Regulates the circadian expression of the core clock components NR1D1 and BMAL1. Enhances the transcriptional repressor activity of NR1D1 through stabilization of NR1D1 protein levels by preventing its ubiquitination and subsequent degradation. Represses the ligand-dependent transcriptional activation function of ESR2. Acts as a regulator of PCK1 expression and gluconeogenesis by a mechanism that involves, at least in part, both NR1D1 and SIRT1. Negatively regulates the deacetylase activity of HDAC3 and can alter its subcellular localization. Positively regulates the beta-catenin pathway (canonical Wnt signaling pathway) and is required for MCC-mediated repression of the beta-catenin pathway. Represses ligand-dependent transcriptional activation function of NR1H2 and NR1H3 and inhibits the interaction of SIRT1 with NR1H3. Plays an important role in tumor suppression through p53/TP53 regulation; stabilizes p53/TP53 by affecting its interaction with ubiquitin ligase MDM2. Represses the transcriptional activator activity of BRCA1. Inhibits SIRT1 in a CHEK2 and PSEM3-dependent manner and inhibits the activity of CHEK2 in vitro. The polypeptide is Cell cycle and apoptosis regulator protein 2 (CCAR2) (Homo sapiens (Human)).